Reading from the N-terminus, the 161-residue chain is Nucleotide-binding protein RC1_3464 (161 aa).

The protein belongs to the YajQ family.

Its function is as follows. Nucleotide-binding protein. The sequence is that of Nucleotide-binding protein RC1_3464 from Rhodospirillum centenum (strain ATCC 51521 / SW).